Here is a 285-residue protein sequence, read N- to C-terminus: 4-diphosphocytidyl-2-C-methyl-D-erythritol kinase (285 aa).

Lysine 10 is a catalytic residue. 93–103 (PIGGGLGGGSS) contacts ATP. Residue aspartate 135 is part of the active site.

Belongs to the GHMP kinase family. IspE subfamily.

It carries out the reaction 4-CDP-2-C-methyl-D-erythritol + ATP = 4-CDP-2-C-methyl-D-erythritol 2-phosphate + ADP + H(+). It functions in the pathway isoprenoid biosynthesis; isopentenyl diphosphate biosynthesis via DXP pathway; isopentenyl diphosphate from 1-deoxy-D-xylulose 5-phosphate: step 3/6. In terms of biological role, catalyzes the phosphorylation of the position 2 hydroxy group of 4-diphosphocytidyl-2C-methyl-D-erythritol. This Vesicomyosocius okutanii subsp. Calyptogena okutanii (strain HA) protein is 4-diphosphocytidyl-2-C-methyl-D-erythritol kinase.